Reading from the N-terminus, the 124-residue chain is Large ribosomal subunit protein bL12 (124 aa).

The protein belongs to the bacterial ribosomal protein bL12 family. In terms of assembly, homodimer. Part of the ribosomal stalk of the 50S ribosomal subunit. Forms a multimeric L10(L12)X complex, where L10 forms an elongated spine to which 2 to 4 L12 dimers bind in a sequential fashion. Binds GTP-bound translation factors.

Forms part of the ribosomal stalk which helps the ribosome interact with GTP-bound translation factors. Is thus essential for accurate translation. The protein is Large ribosomal subunit protein bL12 of Akkermansia muciniphila (strain ATCC BAA-835 / DSM 22959 / JCM 33894 / BCRC 81048 / CCUG 64013 / CIP 107961 / Muc).